A 511-amino-acid chain; its full sequence is Maturase K (511 aa).

Belongs to the intron maturase 2 family. MatK subfamily.

The protein localises to the plastid. The protein resides in the chloroplast. Usually encoded in the trnK tRNA gene intron. Probably assists in splicing its own and other chloroplast group II introns. This Bowiea volubilis (Climbing onion) protein is Maturase K.